The sequence spans 339 residues: Tetraacyldisaccharide 4'-kinase (339 aa).

Position 58–65 (58–65 (NVGGVGKT)) interacts with ATP.

Belongs to the LpxK family.

The enzyme catalyses a lipid A disaccharide + ATP = a lipid IVA + ADP + H(+). It functions in the pathway glycolipid biosynthesis; lipid IV(A) biosynthesis; lipid IV(A) from (3R)-3-hydroxytetradecanoyl-[acyl-carrier-protein] and UDP-N-acetyl-alpha-D-glucosamine: step 6/6. Its function is as follows. Transfers the gamma-phosphate of ATP to the 4'-position of a tetraacyldisaccharide 1-phosphate intermediate (termed DS-1-P) to form tetraacyldisaccharide 1,4'-bis-phosphate (lipid IVA). This is Tetraacyldisaccharide 4'-kinase from Chromobacterium violaceum (strain ATCC 12472 / DSM 30191 / JCM 1249 / CCUG 213 / NBRC 12614 / NCIMB 9131 / NCTC 9757 / MK).